A 135-amino-acid polypeptide reads, in one-letter code: S-protein homolog 20 (135 aa).

Residues 1 to 26 (MNGSSAFHIILSVTFMVFLFGGLCEA) form the signal peptide. Asparagine 88 carries N-linked (GlcNAc...) asparagine glycosylation.

It belongs to the plant self-incompatibility (S1) protein family.

Its subcellular location is the secreted. This chain is S-protein homolog 20, found in Arabidopsis thaliana (Mouse-ear cress).